The sequence spans 615 residues: 1-deoxy-D-xylulose-5-phosphate synthase (615 aa).

Thiamine diphosphate contacts are provided by residues His-76 and 117–119 (GHS). Asp-148 lines the Mg(2+) pocket. Residues 149 to 150 (GA), Asn-177, Tyr-284, and Glu-365 each bind thiamine diphosphate. Asn-177 provides a ligand contact to Mg(2+).

This sequence belongs to the transketolase family. DXPS subfamily. In terms of assembly, homodimer. The cofactor is Mg(2+). Thiamine diphosphate serves as cofactor.

It catalyses the reaction D-glyceraldehyde 3-phosphate + pyruvate + H(+) = 1-deoxy-D-xylulose 5-phosphate + CO2. It functions in the pathway metabolic intermediate biosynthesis; 1-deoxy-D-xylulose 5-phosphate biosynthesis; 1-deoxy-D-xylulose 5-phosphate from D-glyceraldehyde 3-phosphate and pyruvate: step 1/1. Functionally, catalyzes the acyloin condensation reaction between C atoms 2 and 3 of pyruvate and glyceraldehyde 3-phosphate to yield 1-deoxy-D-xylulose-5-phosphate (DXP). The protein is 1-deoxy-D-xylulose-5-phosphate synthase of Francisella tularensis subsp. tularensis (strain FSC 198).